Consider the following 77-residue polypeptide: Small ribosomal subunit protein bS20 (77 aa).

This sequence belongs to the bacterial ribosomal protein bS20 family.

Its function is as follows. Binds directly to 16S ribosomal RNA. The polypeptide is Small ribosomal subunit protein bS20 (Lactococcus lactis subsp. lactis (strain IL1403) (Streptococcus lactis)).